A 212-amino-acid polypeptide reads, in one-letter code: Ras-related protein Rab-15 (212 aa).

10 residues coordinate GTP: S17, G18, V19, G20, K21, T22, C23, S35, S39, and T40. Residue T22 participates in Mg(2+) binding. Short sequence motifs (switch) lie at residues 31-45 (NEFHSSHISTIGVDF) and 63-80 (DTAGQERYQTITKQYYRR). Mg(2+)-binding residues include T40 and D63. Residues G66, N121, K122, D124, S151, and A152 each coordinate GTP. 2 S-geranylgeranyl cysteine lipidation sites follow: C210 and C212. The residue at position 212 (C212) is a Cysteine methyl ester.

Belongs to the small GTPase superfamily. Rab family. The GTP bound form of RAB15 interacts with REP15. Interacts (GTP-bound form) with MICAL1, MICAL3, MICALCL, EHBP1 and EHBP1L1. The cofactor is Mg(2+). In terms of tissue distribution, expressed predominantly in neural tissues.

Its subcellular location is the cell membrane. The enzyme catalyses GTP + H2O = GDP + phosphate + H(+). Its activity is regulated as follows. Regulated by guanine nucleotide exchange factors (GEFs) which promote the exchange of bound GDP for free GTP. Regulated by GTPase activating proteins (GAPs) which increase the GTP hydrolysis activity. Inhibited by GDP dissociation inhibitors (GDIs). In terms of biological role, the small GTPases Rab are key regulators of intracellular membrane trafficking, from the formation of transport vesicles to their fusion with membranes. Rabs cycle between an inactive GDP-bound form and an active GTP-bound form that is able to recruit to membranes different sets of downstream effectors directly responsible for vesicle formation, movement, tethering and fusion. RAB15 may act in concert with RAB3A in regulating aspects of synaptic vesicle membrane flow within the nerve terminal. The chain is Ras-related protein Rab-15 from Rattus norvegicus (Rat).